We begin with the raw amino-acid sequence, 423 residues long: Enolase (423 aa).

Gln-163 contacts (2R)-2-phosphoglycerate. Residue Glu-205 is the Proton donor of the active site. Positions 242, 285, and 312 each coordinate Mg(2+). The (2R)-2-phosphoglycerate site is built by Lys-337, Arg-366, Ser-367, and Lys-388. The active-site Proton acceptor is the Lys-337.

Belongs to the enolase family. It depends on Mg(2+) as a cofactor.

It localises to the cytoplasm. The protein localises to the secreted. Its subcellular location is the cell surface. It carries out the reaction (2R)-2-phosphoglycerate = phosphoenolpyruvate + H2O. The protein operates within carbohydrate degradation; glycolysis; pyruvate from D-glyceraldehyde 3-phosphate: step 4/5. Catalyzes the reversible conversion of 2-phosphoglycerate (2-PG) into phosphoenolpyruvate (PEP). It is essential for the degradation of carbohydrates via glycolysis. This chain is Enolase, found in Desulforapulum autotrophicum (strain ATCC 43914 / DSM 3382 / VKM B-1955 / HRM2) (Desulfobacterium autotrophicum).